Consider the following 434-residue polypeptide: Probable tRNA pseudouridine synthase D (434 aa).

The Nucleophile role is filled by Asp93. Residues 169-396 form the TRUD domain; that stretch reads GTPNYFGQQR…SAGSRRAILL (228 aa).

Belongs to the pseudouridine synthase TruD family.

It carries out the reaction uridine(13) in tRNA = pseudouridine(13) in tRNA. In terms of biological role, could be responsible for synthesis of pseudouridine from uracil-13 in transfer RNAs. The sequence is that of Probable tRNA pseudouridine synthase D from Halobacterium salinarum (strain ATCC 29341 / DSM 671 / R1).